The primary structure comprises 413 residues: uncharacterized protein (413 aa).

The next 7 membrane-spanning stretches (helical) occupy residues 10–32, 162–184, 189–211, 232–254, 259–276, 288–310, and 325–347; these read GLTI…GRLP, VFLH…LVFL, LLPR…AFLV, LSFR…LFFF, YSYS…ILLV, ALMV…SFVT, and FAYA…SLIL.

It is found in the cell membrane. This is an uncharacterized protein from Aquifex aeolicus (strain VF5).